The sequence spans 91 residues: Small ribosomal subunit protein uS19 (91 aa).

A disordered region spans residues 72-91; that stretch reads GEFSPTRTYTGHGSEKGKKK.

It belongs to the universal ribosomal protein uS19 family.

Protein S19 forms a complex with S13 that binds strongly to the 16S ribosomal RNA. The polypeptide is Small ribosomal subunit protein uS19 (Mycoplasma mobile (strain ATCC 43663 / 163K / NCTC 11711) (Mesomycoplasma mobile)).